Reading from the N-terminus, the 247-residue chain is UDP-2,3-diacylglucosamine hydrolase (247 aa).

Mn(2+) is bound by residues aspartate 8, histidine 10, aspartate 41, asparagine 79, and histidine 114. 79 to 80 (NR) contacts substrate. Substrate-binding residues include aspartate 122, serine 160, aspartate 171, glutamine 174, and histidine 202. Residues histidine 202 and histidine 204 each contribute to the Mn(2+) site.

Belongs to the LpxH family. Requires Mn(2+) as cofactor.

Its subcellular location is the cell inner membrane. It catalyses the reaction UDP-2-N,3-O-bis[(3R)-3-hydroxytetradecanoyl]-alpha-D-glucosamine + H2O = 2-N,3-O-bis[(3R)-3-hydroxytetradecanoyl]-alpha-D-glucosaminyl 1-phosphate + UMP + 2 H(+). It participates in glycolipid biosynthesis; lipid IV(A) biosynthesis; lipid IV(A) from (3R)-3-hydroxytetradecanoyl-[acyl-carrier-protein] and UDP-N-acetyl-alpha-D-glucosamine: step 4/6. Its function is as follows. Hydrolyzes the pyrophosphate bond of UDP-2,3-diacylglucosamine to yield 2,3-diacylglucosamine 1-phosphate (lipid X) and UMP by catalyzing the attack of water at the alpha-P atom. Involved in the biosynthesis of lipid A, a phosphorylated glycolipid that anchors the lipopolysaccharide to the outer membrane of the cell. In Xanthomonas campestris pv. campestris (strain 8004), this protein is UDP-2,3-diacylglucosamine hydrolase.